Here is a 38-residue protein sequence, read N- to C-terminus: Photosystem II reaction center protein M (38 aa).

The chain crosses the membrane as a helical span at residues 7-27 (GFVASILFVLVPSVFLIILYI).

This sequence belongs to the PsbM family. As to quaternary structure, PSII is composed of 1 copy each of membrane proteins PsbA, PsbB, PsbC, PsbD, PsbE, PsbF, PsbH, PsbI, PsbJ, PsbK, PsbL, PsbM, PsbT, PsbX, PsbY, PsbZ, Psb30/Ycf12, peripheral proteins PsbO, CyanoQ (PsbQ), PsbU, PsbV and a large number of cofactors. It forms dimeric complexes.

Its subcellular location is the cellular thylakoid membrane. Its function is as follows. One of the components of the core complex of photosystem II (PSII). PSII is a light-driven water:plastoquinone oxidoreductase that uses light energy to abstract electrons from H(2)O, generating O(2) and a proton gradient subsequently used for ATP formation. It consists of a core antenna complex that captures photons, and an electron transfer chain that converts photonic excitation into a charge separation. This subunit is found at the monomer-monomer interface. This Nostoc sp. (strain PCC 7120 / SAG 25.82 / UTEX 2576) protein is Photosystem II reaction center protein M.